The chain runs to 240 residues: PF03932 family protein CutC (240 aa).

It belongs to the CutC family.

Its subcellular location is the cytoplasm. The polypeptide is PF03932 family protein CutC (Xanthomonas campestris pv. campestris (strain 8004)).